The following is a 65-amino-acid chain: Large ribosomal subunit protein bL35 (65 aa).

Residues 1–40 (MPKMKTNSGSKKRFALTGTGKIKRKHAFHSHILTKKSKKR) are disordered. Over residues 21–40 (KIKRKHAFHSHILTKKSKKR) the composition is skewed to basic residues.

Belongs to the bacterial ribosomal protein bL35 family.

The chain is Large ribosomal subunit protein bL35 from Bacteroides fragilis (strain ATCC 25285 / DSM 2151 / CCUG 4856 / JCM 11019 / LMG 10263 / NCTC 9343 / Onslow / VPI 2553 / EN-2).